Reading from the N-terminus, the 216-residue chain is 2,5-diamino-6-ribosylamino-4(3H)-pyrimidinone 5'-phosphate reductase (216 aa).

Residues T51, D55, 79–82, V126, and 148–151 each bind NADP(+); these read SMAR and GSTL.

Belongs to the HTP reductase family. In terms of assembly, homodimer.

It catalyses the reaction 2,5-diamino-6-(1-D-ribitylamino)pyrimidin-4(3H)-one 5'-phosphate + NADP(+) = 2,5-diamino-6-(1-D-ribosylamino)pyrimidin-4(3H)-one 5'-phosphate + NADPH + H(+). The catalysed reaction is 2,5-diamino-6-(1-D-ribitylamino)pyrimidin-4(3H)-one 5'-phosphate + NAD(+) = 2,5-diamino-6-(1-D-ribosylamino)pyrimidin-4(3H)-one 5'-phosphate + NADH + H(+). The protein operates within cofactor biosynthesis; riboflavin biosynthesis. Its function is as follows. Catalyzes an early step in riboflavin biosynthesis, the NADPH-dependent reduction of the ribose side chain of 2,5-diamino-6-ribosylamino-4(3H)-pyrimidinone 5'-phosphate, yielding 2,5-diamino-6-ribitylamino-4(3H)-pyrimidinone 5'-phosphate. This chain is 2,5-diamino-6-ribosylamino-4(3H)-pyrimidinone 5'-phosphate reductase, found in Methanothermobacter thermautotrophicus (strain ATCC 29096 / DSM 1053 / JCM 10044 / NBRC 100330 / Delta H) (Methanobacterium thermoautotrophicum).